A 352-amino-acid chain; its full sequence is Anthranilate phosphoribosyltransferase (352 aa).

5-phospho-alpha-D-ribose 1-diphosphate is bound by residues G96, 99-100 (GS), S104, 106-109 (NIST), 124-132 (KHGNRSVSS), and S136. G96 serves as a coordination point for anthranilate. Residue S108 coordinates Mg(2+). Residue N127 coordinates anthranilate. Residue R182 participates in anthranilate binding. Mg(2+) contacts are provided by D241 and E242.

The protein belongs to the anthranilate phosphoribosyltransferase family. Homodimer. Mg(2+) serves as cofactor.

The enzyme catalyses N-(5-phospho-beta-D-ribosyl)anthranilate + diphosphate = 5-phospho-alpha-D-ribose 1-diphosphate + anthranilate. The protein operates within amino-acid biosynthesis; L-tryptophan biosynthesis; L-tryptophan from chorismate: step 2/5. Functionally, catalyzes the transfer of the phosphoribosyl group of 5-phosphorylribose-1-pyrophosphate (PRPP) to anthranilate to yield N-(5'-phosphoribosyl)-anthranilate (PRA). The chain is Anthranilate phosphoribosyltransferase from Syntrophotalea carbinolica (strain DSM 2380 / NBRC 103641 / GraBd1) (Pelobacter carbinolicus).